The primary structure comprises 534 residues: T-complex protein 1 subunit gamma (534 aa).

Residue methionine 1 is modified to N-acetylmethionine. Serine 257 is subject to Phosphoserine. Cysteines 371 and 377 form a disulfide.

It belongs to the TCP-1 chaperonin family. As to quaternary structure, heterooligomeric complex of about 850 to 900 kDa that forms two stacked rings, 12 to 16 nm in diameter.

It localises to the cytoplasm. Functionally, molecular chaperone; assists the folding of proteins upon ATP hydrolysis. Known to play a role, in vitro, in the folding of actin and tubulin. In yeast may play a role in mitotic spindle formation. In Saccharomyces cerevisiae (strain ATCC 204508 / S288c) (Baker's yeast), this protein is T-complex protein 1 subunit gamma (CCT3).